The sequence spans 131 residues: Large ribosomal subunit protein bL20 (131 aa).

It belongs to the bacterial ribosomal protein bL20 family.

Binds directly to 23S ribosomal RNA and is necessary for the in vitro assembly process of the 50S ribosomal subunit. It is not involved in the protein synthesizing functions of that subunit. The chain is Large ribosomal subunit protein bL20 from Mycolicibacterium paratuberculosis (strain ATCC BAA-968 / K-10) (Mycobacterium paratuberculosis).